Reading from the N-terminus, the 103-residue chain is Seminal ribonuclease (103 aa).

Disulfide bonds link Cys12-Cys70, Cys26-Cys81, Cys44-Cys96, and Cys51-Cys58. Substrate-binding positions include 27 to 31, Lys52, and Arg71; that span reads KLVNT.

It belongs to the pancreatic ribonuclease family. In terms of assembly, homodimer; disulfide-linked.

It localises to the secreted. The enzyme catalyses an [RNA] containing cytidine + H2O = an [RNA]-3'-cytidine-3'-phosphate + a 5'-hydroxy-ribonucleotide-3'-[RNA].. The catalysed reaction is an [RNA] containing uridine + H2O = an [RNA]-3'-uridine-3'-phosphate + a 5'-hydroxy-ribonucleotide-3'-[RNA].. Its function is as follows. This enzyme hydrolyzes both single- and double-stranded RNA. This is Seminal ribonuclease (SRN) from Cephalophus silvicultor (Yellow-backed duiker).